We begin with the raw amino-acid sequence, 174 residues long: uncharacterized protein (174 aa).

Belongs to the gamma-class carbonic anhydrase family.

This is an uncharacterized protein from Pseudomonas aeruginosa (strain ATCC 15692 / DSM 22644 / CIP 104116 / JCM 14847 / LMG 12228 / 1C / PRS 101 / PAO1).